The sequence spans 158 residues: NAD(P)H-quinone oxidoreductase subunit J, chloroplastic (158 aa).

It belongs to the complex I 30 kDa subunit family. In terms of assembly, NDH is composed of at least 16 different subunits, 5 of which are encoded in the nucleus.

It is found in the plastid. It localises to the chloroplast thylakoid membrane. The enzyme catalyses a plastoquinone + NADH + (n+1) H(+)(in) = a plastoquinol + NAD(+) + n H(+)(out). It catalyses the reaction a plastoquinone + NADPH + (n+1) H(+)(in) = a plastoquinol + NADP(+) + n H(+)(out). Functionally, NDH shuttles electrons from NAD(P)H:plastoquinone, via FMN and iron-sulfur (Fe-S) centers, to quinones in the photosynthetic chain and possibly in a chloroplast respiratory chain. The immediate electron acceptor for the enzyme in this species is believed to be plastoquinone. Couples the redox reaction to proton translocation, and thus conserves the redox energy in a proton gradient. The sequence is that of NAD(P)H-quinone oxidoreductase subunit J, chloroplastic from Trachelium caeruleum (Blue throatwort).